The primary structure comprises 234 residues: Demethylmenaquinone methyltransferase (234 aa).

S-adenosyl-L-methionine-binding positions include Thr-62, Asp-80, 100–101 (DA), and Ser-117.

Belongs to the class I-like SAM-binding methyltransferase superfamily. MenG/UbiE family.

It carries out the reaction a 2-demethylmenaquinol + S-adenosyl-L-methionine = a menaquinol + S-adenosyl-L-homocysteine + H(+). Its pathway is quinol/quinone metabolism; menaquinone biosynthesis; menaquinol from 1,4-dihydroxy-2-naphthoate: step 2/2. Functionally, methyltransferase required for the conversion of demethylmenaquinol (DMKH2) to menaquinol (MKH2). This chain is Demethylmenaquinone methyltransferase, found in Mycobacterium bovis (strain ATCC BAA-935 / AF2122/97).